We begin with the raw amino-acid sequence, 439 residues long: Agmatine coumaroyltransferase-1 (439 aa).

Catalysis depends on proton acceptor residues His-152 and Asp-385.

Belongs to the plant acyltransferase family. In terms of assembly, monomer.

The enzyme catalyses 4-coumaroyl-CoA + agmatine = N-(4-guanidinobutyl)-4-hydroxycinnamamide + CoA + H(+). Its activity is regulated as follows. Inhibited by DEPC. Completely inhibited by ZnSO(4), strongly inhibited by CuSO(4), partially inhibited by MnCl(2). Unaffected by MgCl(2) or CaCl(2). Functionally, involved in the synthesis of hordatines (antifungal hydroxycinnamoylagmatine derivatives). Specific for agmatine as the acyl acceptor, inactive towards tyramine and putrescine. Has activity with the acyl donors 4-coumaroyl-CoA, cinnamoyl-CoA, caffeoyl-CoA, feruloyl-CoA, and to a lesser extent sinapoyl-CoA. This Hordeum vulgare (Barley) protein is Agmatine coumaroyltransferase-1 (ACT-1).